A 372-amino-acid polypeptide reads, in one-letter code: Actin-related protein 2/3 complex subunit 1B (372 aa).

WD repeat units lie at residues 6–45 (FLVEPISCHAWNKDRTQIAICPNNHEVHIYEKSGAKWTKV), 50–89 (EHNGQVTGIDWAPESNRIVTCGTDRNAYVWTLKGRTWKPT), 94–135 (RINR…WVCK), 140–179 (PIRSTVLSLDWHPNNVLLAAGSCDFKCRIFSAYIKEVEER), 242–280 (SETLPLLALTFITDNSLVAAGHDCFPVLFTYDAAAGMLS), and 324–367 (LHKN…SALK).

It belongs to the WD repeat ARPC1 family. As to quaternary structure, component of the Arp2/3 complex composed of ACTR2/ARP2, ACTR3/ARP3, ARPC1B/p41-ARC, ARPC2/p34-ARC, ARPC3/p21-ARC, ARPC4/p20-ARC and ARPC5/p16-ARC.

It localises to the cytoplasm. The protein localises to the cytoskeleton. The protein resides in the nucleus. In terms of biological role, component of the Arp2/3 complex, a multiprotein complex that mediates actin polymerization upon stimulation by nucleation-promoting factor (NPF). The Arp2/3 complex mediates the formation of branched actin networks in the cytoplasm, providing the force for cell motility. In addition to its role in the cytoplasmic cytoskeleton, the Arp2/3 complex also promotes actin polymerization in the nucleus, thereby regulating gene transcription and repair of damaged DNA. The Arp2/3 complex promotes homologous recombination (HR) repair in response to DNA damage by promoting nuclear actin polymerization, leading to drive motility of double-strand breaks (DSBs). The polypeptide is Actin-related protein 2/3 complex subunit 1B (Homo sapiens (Human)).